The primary structure comprises 497 residues: MAAAGEGTPSSRGPRRDPPRRPPRNGYGVYVYPNSFFRYEGEWKAGRKHGHGKLLFKDGSYYEGAFVDGEITGEGRRHWAWSGDTFSGQFVLGEPQGYGVMEYKAGGCYEGEVSHGMREGHGFLVDRDGQVYQGSFHDNKRHGPGQMLFQNGDKYDGDWVRDRRQGHGVLRCADGSTYKGQWHSDVFSGLGSMAHCSGVTYYGLWINGHPAEQATRIVILGPEVMEVAQGSPFSVNVQLLQDHGEIAKSESGRVLQISAGVRYVQLSAYSEVNFFKVDRDNQETLIQTPFGFECIPYPVSSPAAGVPGPRAAKGGAEADVPLPRGDLELHLGALHGQEDTPGGLLARGHAPHCPGACQRVEQGCAEFTDVLLGPPPPGYHPFLFLDSLHKKAGGRSRGGLHPRGTPPTAQEPPGGSRPEGRATEEQAAAAHLGEYVLMIRDVTTPPFLGRRLPPAFKHLRVVAKRAGQPPHVLEEGPEASSSWQAAHSCTPEPPAPR.

The segment at methionine 1–tyrosine 27 is disordered. MORN repeat units follow at residues tyrosine 39–tyrosine 61, tyrosine 62–aspartate 84, phenylalanine 86–cysteine 108, tyrosine 109–valine 131, tyrosine 132–lysine 154, tyrosine 155–threonine 177, and tyrosine 178–threonine 200. 2 disordered regions span residues glycine 393–glutamate 425 and glutamine 468–arginine 497.

The sequence is that of MORN repeat-containing protein 1 (MORN1) from Homo sapiens (Human).